The chain runs to 302 residues: RNA polymerase sigma factor RpoH (302 aa).

The tract at residues 57–126 (LVTSHLRLVA…IQEYILRSWS (70 aa)) is sigma-70 factor domain-2. Positions 81 to 84 (ELIS) match the Interaction with polymerase core subunit RpoC motif. The tract at residues 235-286 (AMDKLNDREKHILTERRLSDNPKTLEELSQVYGVSRERVRQIEVRAFDKLQK) is sigma-70 factor domain-4. The H-T-H motif DNA-binding region spans 259 to 278 (LEELSQVYGVSRERVRQIEV).

The protein belongs to the sigma-70 factor family. RpoH subfamily. As to quaternary structure, interacts with the RNA polymerase core enzyme.

The protein resides in the cytoplasm. Functionally, sigma factors are initiation factors that promote the attachment of RNA polymerase to specific initiation sites and are then released. This sigma factor is involved in regulation of expression of heat shock genes. The protein is RNA polymerase sigma factor RpoH of Zymomonas mobilis subsp. mobilis (strain ATCC 31821 / ZM4 / CP4).